The sequence spans 442 residues: GTPase Der (442 aa).

2 EngA-type G domains span residues 2 to 167 (RTIA…PIQN) and 175 to 351 (FKFC…EQAM). GTP contacts are provided by residues 8–15 (GKPNVGKS), 55–59 (DTGGI), 119–122 (NKIE), 181–188 (GRPNVGKS), 228–232 (DTAGI), and 293–296 (NKWD). The 85-residue stretch at 352–436 (RKIATSLLND…PITLYWQDKN (85 aa)) folds into the KH-like domain.

The protein belongs to the TRAFAC class TrmE-Era-EngA-EngB-Septin-like GTPase superfamily. EngA (Der) GTPase family. As to quaternary structure, associates with the 50S ribosomal subunit.

Functionally, GTPase that plays an essential role in the late steps of ribosome biogenesis. The chain is GTPase Der from Ureaplasma parvum serovar 3 (strain ATCC 27815 / 27 / NCTC 11736).